A 103-amino-acid chain; its full sequence is Large ribosomal subunit protein uL23c (103 aa).

The protein belongs to the universal ribosomal protein uL23 family. Part of the 50S ribosomal subunit.

It localises to the plastid. Its subcellular location is the chloroplast. Its function is as follows. Binds to 23S rRNA. The chain is Large ribosomal subunit protein uL23c (rpl23) from Gracilaria tenuistipitata var. liui (Red alga).